A 156-amino-acid chain; its full sequence is 3-hydroxyacyl-[acyl-carrier-protein] dehydratase FabZ (156 aa).

Residue His57 is part of the active site.

Belongs to the thioester dehydratase family. FabZ subfamily.

The protein resides in the cytoplasm. The catalysed reaction is a (3R)-hydroxyacyl-[ACP] = a (2E)-enoyl-[ACP] + H2O. Involved in unsaturated fatty acids biosynthesis. Catalyzes the dehydration of short chain beta-hydroxyacyl-ACPs and long chain saturated and unsaturated beta-hydroxyacyl-ACPs. This Anaeromyxobacter dehalogenans (strain 2CP-C) protein is 3-hydroxyacyl-[acyl-carrier-protein] dehydratase FabZ.